The following is an 856-amino-acid chain: Inactive rhomboid protein 2 (856 aa).

The interval 1-115 (MASADKNGGS…PGFRRQASLS (115 aa)) is disordered. At 1-409 (MASADKNGGS…HRPYFTYWLT (409 aa)) the chain is on the cytoplasmic side. Position 90 is a phosphoserine (Ser90). Positions 94–106 (PRSRWQESSEKRP) are enriched in basic and acidic residues. Residues Ser113 and Ser117 each carry the phosphoserine modification. A disordered region spans residues 165–184 (PSQEAPSFQGTESPKPCKMP). Positions 191–271 (ARGRAFRHPE…GQRCRVVKRS (81 aa)) are involved in interaction with FRMD8. Phosphoserine occurs at positions 323, 325, and 328. Residues 410 to 430 (FVHVIITLLVICTYGIAPVGF) form a helical membrane-spanning segment. Topologically, residues 431 to 660 (AQHVTTQLVL…PDQFYRLWLS (230 aa)) are lumenal. The interval 531–553 (GPPMDKSDLGQKRTSGAVCHQDP) is disordered. A helical transmembrane segment spans residues 661 to 681 (LFLHAGVVHCLVSVVFQMTIL). The Cytoplasmic segment spans residues 682–692 (RDLEKLAGWHR). A helical transmembrane segment spans residues 693-713 (IAIIFILSGITGNLASAIFLP). The Lumenal portion of the chain corresponds to 714–715 (YR). Residues 716–736 (AEVGPAGSQFGLLACLFVELF) form a helical membrane-spanning segment. Residues 737-747 (QSWPLLERPWK) are Cytoplasmic-facing. The helical transmembrane segment at 748–768 (AFLNLSAIVLFLFICGLLPWI) threads the bilayer. The Lumenal portion of the chain corresponds to 769 to 773 (DNIAH). A helical transmembrane segment spans residues 774 to 794 (IFGFLSGLLLAFAFLPYITFG). Over 795 to 802 (TSDKYRKR) the chain is Cytoplasmic. A helical membrane pass occupies residues 803-823 (ALILVSLLAFAGLFAALVLWL). Residues 824–856 (YIYPINWPWIEHLTCFPFTSRFCEKYELDQVLH) lie on the Lumenal side of the membrane.

This sequence belongs to the peptidase S54 family. Interacts with EGF. Interacts (via cytoplasmic N-terminus) with FRMD8/iTAP; this interaction leads to mutual protein stabilization. Interacts with ADAM17/TACE. In terms of tissue distribution, found in the epidermis and esophageal epithelium.

The protein resides in the endoplasmic reticulum membrane. The protein localises to the cell membrane. In terms of biological role, regulates ADAM17 protease, a sheddase of the epidermal growth factor (EGF) receptor ligands and TNF, thereby plays a role in sleep, cell survival, proliferation, migration and inflammation. Does not exhibit any protease activity on its own. The polypeptide is Inactive rhomboid protein 2 (RHBDF2) (Homo sapiens (Human)).